Here is a 117-residue protein sequence, read N- to C-terminus: uncharacterized protein (117 aa).

A disordered region spans residues 16–56 (FSQSSDGRSNGGGSSSGDSVSTTSDGLLTTGTSPNTSSTSL). Positions 31–56 (SGDSVSTTSDGLLTTGTSPNTSSTSL) are enriched in low complexity.

This is an uncharacterized protein from Saccharomyces cerevisiae (strain ATCC 204508 / S288c) (Baker's yeast).